The chain runs to 144 residues: MAVQSKAFCAGGLAPGWKLLVQGHADSGEDRFETNFLLETGDIAFHIKPRFSSATVVGNAFQYGRWGPEQVSSIFPLAPGEPFEIEVSWDAEHFHVYAPEHKVLQFPCRQRPLGATTRVRVLSDHCLAQVELAKRGLSWGDRGY.

The region spanning 5–133 is the Galectin domain; that stretch reads SKAFCAGGLA…DHCLAQVELA (129 aa). Residue Ser-138 is modified to Phosphoserine.

As to quaternary structure, homodimer. Not detected in lens.

The chain is Grifin (GRIFIN) from Homo sapiens (Human).